The sequence spans 498 residues: Elastase (498 aa).

Positions 1-23 (MKKVSTLDLLFVAIMGVSPAAFA) are cleaved as a signal peptide. The propeptide occupies 24 to 197 (ADLIDVSKLP…VLDQWEGLAH (174 aa)). An intrachain disulfide couples Cys-227 to Cys-255. Thr-236 carries the phosphothreonine modification. Position 333 (Asp-333) interacts with Ca(2+). His-337 lines the Zn(2+) pocket. Glu-338 is an active-site residue. Residues His-341 and Glu-361 each contribute to the Zn(2+) site. Glu-369, Glu-372, Asp-380, and Leu-382 together coordinate Ca(2+). Catalysis depends on His-420, which acts as the Proton donor. Cys-467 and Cys-494 form a disulfide bridge.

The protein belongs to the peptidase M4 family. Ca(2+) serves as cofactor. Requires Zn(2+) as cofactor. Post-translationally, made as a pre-pro-protein which is exported to the periplasm. Probably autocatalyzes cleavage of its pro-peptide. The pro-peptide can be secreted with mature elastase.

The protein localises to the secreted. The enzyme catalyses Hydrolysis of proteins including elastin, collagen types III and IV, fibronectin and immunoglobulin A, generally with bulky hydrophobic group at P1'. Insulin B chain cleavage pattern identical to that of thermolysin, but specificity differs in other respects.. Its function is as follows. Cleaves host elastase, collagen, IgI and several complement components as well as endogenous pro-aminopeptidase, pro-chitin-binding protein (cbpD). Cleaves its own pro-peptide. Involved in the pathogenesis of P.aeruginosa infections. The chain is Elastase (lasB) from Pseudomonas aeruginosa (strain UCBPP-PA14).